A 342-amino-acid chain; its full sequence is Heat-inducible transcription repressor HrcA (342 aa).

The protein belongs to the HrcA family.

Its function is as follows. Negative regulator of class I heat shock genes (grpE-dnaK-dnaJ and groELS operons). Prevents heat-shock induction of these operons. This chain is Heat-inducible transcription repressor HrcA, found in Dechloromonas aromatica (strain RCB).